The primary structure comprises 406 residues: MNLALEILEKRGFLKQCTNLEALSTLMDKERVVFYVGVDATSTSLHIGHLIPFMVMAHLQRQGHIPIALVGGGTTKIGDPSGKDAMRKILSKEDIEKNVKAIRAQLLRIIDFSHGYILDNSAWLDNINYIEFLRDIGVCFSVNRMLGFETYKRRIKDGLSFIEFNYQLLQSYDFYMLNKIKNCKLQIGGDDQWGNIVSGVDLIKKKLGTEVFGLTLPLITRSDGKKMGKSEKGAVYLDAELYSVYDFYQYFRNVPDLDVKNFLYLFTFLGDDEIEHMSSVKGYLLNKAKETLAFEITKIVHGEDAALKASSAARAAFKGSEGDRADIPFFKLALDSLEGSILLIDLMVLSKVVSSKSEARRLINSGGVYIDKVRIGDQDYCLNKDNFINGEIELKIGKKRILRVIL.

Position 35 (Tyr-35) interacts with L-tyrosine. Positions 40–49 match the 'HIGH' region motif; that stretch reads ATSTSLHIGH. Residues Tyr-166 and Gln-170 each coordinate L-tyrosine. Residues 226–230 carry the 'KMSKS' region motif; that stretch reads KMGKS. Lys-229 is a binding site for ATP. In terms of domain architecture, S4 RNA-binding spans 341–405; sequence ILLIDLMVLS…IGKKRILRVI (65 aa).

It belongs to the class-I aminoacyl-tRNA synthetase family. TyrS type 1 subfamily. Homodimer.

The protein localises to the cytoplasm. It catalyses the reaction tRNA(Tyr) + L-tyrosine + ATP = L-tyrosyl-tRNA(Tyr) + AMP + diphosphate + H(+). Functionally, catalyzes the attachment of tyrosine to tRNA(Tyr) in a two-step reaction: tyrosine is first activated by ATP to form Tyr-AMP and then transferred to the acceptor end of tRNA(Tyr). The polypeptide is Tyrosine--tRNA ligase (Borrelia turicatae (strain 91E135)).